A 1925-amino-acid chain; its full sequence is Diacylglycerol kinase eta (1925 aa).

Residues 82–175 (AIIREGYLMK…WLGSLKTATA (94 aa)) enclose the PH domain. 2 consecutive Phorbol-ester/DAG-type zinc fingers follow at residues 195–245 (HHHW…IANC) and 268–319 (PHQW…PIVC). Residues 350-486 (GNFSPLLVFV…DRWSIMVFEK (137 aa)) form the DAGKc domain. 8 disordered regions span residues 620-641 (EKDN…SEKE), 783-805 (ANID…TPTE), 847-872 (DKER…SEPQ), 1013-1065 (TTLC…NPQQ), 1113-1141 (DRNS…TRTY), 1167-1234 (NTTT…SSAS), 1256-1276 (IRRH…KDKD), and 1385-1405 (FSAG…PTEE). The segment covering 792 to 802 (LSPSSEAGENT) has biased composition (polar residues). Residues 863-872 (ADVNEKSEPQ) are compositionally biased toward basic and acidic residues. A compositionally biased stretch (basic and acidic residues) spans 1115 to 1128 (NSGDNHNDNGKNEE). Over residues 1167-1187 (NTTTSTSSSISTTTTTSTTST) the composition is skewed to low complexity. The segment covering 1386 to 1405 (SAGDKDEKPGKDKERTPTEE) has biased composition (basic and acidic residues). The SAM domain occupies 1862 to 1925 (WSVNEVVTWL…LQAIKDLSEN (64 aa)).

It belongs to the eukaryotic diacylglycerol kinase family.

It is found in the cytoplasm. It carries out the reaction a 1,2-diacyl-sn-glycerol + ATP = a 1,2-diacyl-sn-glycero-3-phosphate + ADP + H(+). In terms of biological role, phosphorylates diacylglycerol (DAG) to generate phosphatidic acid (PA). The sequence is that of Diacylglycerol kinase eta from Drosophila mojavensis (Fruit fly).